Here is a 696-residue protein sequence, read N- to C-terminus: Spindle assembly checkpoint component MAD1 (696 aa).

2 disordered regions span residues 1–22 (MSTG…SINN) and 394–415 (QIHA…TENK). Residues 402-413 (KQQEQEKEENTE) are compositionally biased toward basic and acidic residues.

This sequence belongs to the MAD1 family. Component of the mitotic checkpoint complex (MCC).

The protein resides in the nucleus. Central component of the spindle assembly checkpoint which is a feedback control that prevents cells with incompletely assembled spindles from leaving mitosis. This is Spindle assembly checkpoint component MAD1 from Candida albicans (strain SC5314 / ATCC MYA-2876) (Yeast).